Consider the following 509-residue polypeptide: Solute carrier family 2, facilitated glucose transporter member 4 (509 aa).

Residues 1–24 (MPSGFQQIGSEDGEPPQQRVTGTL) lie on the Cytoplasmic side of the membrane. The interval 7 to 13 (QIGSEDG) is interaction with SRFBP1. Position 10 is a phosphoserine (Ser-10). The chain crosses the membrane as a helical span at residues 25 to 45 (VLAVFSAVLGSLQFGYNIGVI). Residues 46-81 (NAPQKVIEQSYNETWLGRQGPEGPSSIPPGTLTTLW) are Extracellular-facing. The N-linked (GlcNAc...) asparagine glycan is linked to Asn-57. A helical membrane pass occupies residues 82–102 (ALSVAIFSVGGMISSFLIGII). Over 103-111 (SQWLGRKRA) the chain is Cytoplasmic. The chain crosses the membrane as a helical span at residues 112 to 132 (MLVNNVLAVLGGSLMGLANAA). Over 133-142 (ASYEMLILGR) the chain is Extracellular. A helical membrane pass occupies residues 143–163 (FLIGAYSGLTSGLVPMYVGEI). Residues 164-171 (APTHLRGA) are Cytoplasmic-facing. A helical membrane pass occupies residues 172–192 (LGTLNQLAIVIGILIAQVLGL). Position 177 (Gln-177) interacts with D-glucose. At 193–201 (ESLLGTASL) the chain is on the extracellular side. A helical transmembrane segment spans residues 202-222 (WPLLLGLTVLPALLQLVLLPF). Cys-223 carries S-palmitoyl cysteine lipidation. Topologically, residues 223-287 (CPESPRYLYI…LLGSRTHRQP (65 aa)) are cytoplasmic. A Phosphoserine; by SGK1 modification is found at Ser-274. The helical transmembrane segment at 288-308 (LIIAVVLQLSQQLSGINAVFY) threads the bilayer. D-glucose is bound by residues 298–299 (QQ) and Asn-304. The Extracellular segment spans residues 309 to 323 (YSTSIFETAGVGQPA). The chain crosses the membrane as a helical span at residues 324 to 344 (YATIGAGVVNTVFTLVSVLLV). Asn-333 contacts D-glucose. Residues 345–353 (ERAGRRTLH) lie on the Cytoplasmic side of the membrane. A helical membrane pass occupies residues 354–374 (LLGLAGMCGCAILMTVALLLL). Residues 375-384 (ERVPAMSYVS) are Extracellular-facing. The chain crosses the membrane as a helical span at residues 385–405 (IVAIFGFVAFFEIGPGPIPWF). The D-glucose site is built by Glu-396 and Trp-404. Residues 406–417 (IVAELFSQGPRP) are Cytoplasmic-facing. A helical membrane pass occupies residues 418–438 (AAMAVAGFSNWTSNFIIGMGF). The Extracellular segment spans residues 439–445 (QYVAEAM). Residues 446-466 (GPYVFLLFAVLLLGFFIFTFL) traverse the membrane as a helical segment. Residues 467-509 (RVPETRGRTFDQISAAFHRTPSLLEQEVKPSTELEYLGPDEND) lie on the Cytoplasmic side of the membrane. Thr-486 carries the post-translational modification Phosphothreonine. Phosphoserine is present on Ser-488. The Dileucine internalization motif motif lies at 489 to 490 (LL).

It belongs to the major facilitator superfamily. Sugar transporter (TC 2.A.1.1) family. Glucose transporter subfamily. Interacts with NDUFA9. Binds to DAXX. Interacts via its N-terminus with SRFBP1. Interacts with TRARG1; the interaction is required for proper SLC2A4 recycling after insulin stimulation. Sumoylated. Post-translationally, palmitoylated. Palmitoylation by ZDHHC7 controls the insulin-dependent translocation of GLUT4 to the plasma membrane. Skeletal and cardiac muscles; brown and white fat.

The protein localises to the cell membrane. Its subcellular location is the endomembrane system. It is found in the cytoplasm. It localises to the perinuclear region. It carries out the reaction D-glucose(out) = D-glucose(in). Its function is as follows. Insulin-regulated facilitative glucose transporter, which plays a key role in removal of glucose from circulation. Response to insulin is regulated by its intracellular localization: in the absence of insulin, it is efficiently retained intracellularly within storage compartments in muscle and fat cells. Upon insulin stimulation, translocates from these compartments to the cell surface where it transports glucose from the extracellular milieu into the cell. The sequence is that of Solute carrier family 2, facilitated glucose transporter member 4 from Homo sapiens (Human).